The chain runs to 290 residues: UPF0761 membrane protein YihY (290 aa).

A run of 6 helical transmembrane segments spans residues 44 to 64, 104 to 124, 140 to 160, 183 to 203, 210 to 230, and 244 to 264; these read LLSL…FPMF, VGAC…DSAL, FAVY…SLAI, VLPL…VPTT, AIVG…GFAL, and VLAV…IVLL.

Belongs to the UPF0761 family.

Its subcellular location is the cell inner membrane. This Salmonella arizonae (strain ATCC BAA-731 / CDC346-86 / RSK2980) protein is UPF0761 membrane protein YihY.